A 421-amino-acid polypeptide reads, in one-letter code: eIF5-mimic protein 1 (421 aa).

Residues 1 to 24 (MNTGKQQKPVLTGQRFKTRKRDEK) are disordered. The W2 domain occupies 250–417 (TQQTLGTRKE…QNAEEESESE (168 aa)).

It belongs to the BZW family.

The protein localises to the cytoplasm. In terms of biological role, translation initiation regulator which may repress non-AUG initiated translation and repeat-associated non-AUG (RAN) initiated translation by acting as a competitive inhibitor of eukaryotic translation initiation factor 5 (EIF5) function. In Danio rerio (Zebrafish), this protein is eIF5-mimic protein 1 (bzw2).